We begin with the raw amino-acid sequence, 324 residues long: tRNA-modifying protein YgfZ (324 aa).

A folate-binding site is contributed by Trp-184.

This sequence belongs to the tRNA-modifying YgfZ family.

It localises to the cytoplasm. Folate-binding protein involved in regulating the level of ATP-DnaA and in the modification of some tRNAs. It is probably a key factor in regulatory networks that act via tRNA modification, such as initiation of chromosomal replication. This is tRNA-modifying protein YgfZ from Vibrio vulnificus (strain CMCP6).